The sequence spans 402 residues: Homoserine O-acetyltransferase (402 aa).

An AB hydrolase-1 domain is found at N38 to P359. S146 serves as the catalytic Nucleophile. R217 provides a ligand contact to substrate. Catalysis depends on residues D319 and H352. Residue D353 participates in substrate binding.

It belongs to the AB hydrolase superfamily. MetX family. Homodimer.

The protein localises to the cytoplasm. The catalysed reaction is L-homoserine + acetyl-CoA = O-acetyl-L-homoserine + CoA. It participates in amino-acid biosynthesis; L-methionine biosynthesis via de novo pathway; O-acetyl-L-homoserine from L-homoserine: step 1/1. Transfers an acetyl group from acetyl-CoA to L-homoserine, forming acetyl-L-homoserine. The sequence is that of Homoserine O-acetyltransferase from Haloarcula marismortui (strain ATCC 43049 / DSM 3752 / JCM 8966 / VKM B-1809) (Halobacterium marismortui).